The primary structure comprises 180 residues: Pro-glucagon (180 aa).

An N-terminal signal peptide occupies residues Met-1–Gln-20. The segment at Asn-25–Thr-59 is disordered. Residue Ser-54 is modified to Phosphoserine. The propeptide occupies Asn-84–Ala-89. Residues Ser-105 and Ser-108 each carry the phosphoserine modification. Arg-127 is subject to Arginine amide. Positions Asp-131 to Arg-145 are excised as a propeptide. Residues Ser-150 and Ser-152 each carry the phosphoserine modification.

It belongs to the glucagon family. In terms of processing, proglucagon is post-translationally processed in a tissue-specific manner in pancreatic A cells and intestinal L cells. In pancreatic A cells, the major bioactive hormone is glucagon cleaved by PCSK2/PC2. In the intestinal L cells PCSK1/PC1 liberates GLP-1, GLP-2, glicentin and oxyntomodulin. GLP-1 is further N-terminally truncated by post-translational processing in the intestinal L cells resulting in GLP-1(7-37) GLP-1-(7-36)amide. The C-terminal amidation is neither important for the metabolism of GLP-1 nor for its effects on the endocrine pancreas. Glucagon is secreted in the A cells of the islets of Langerhans. GLP-1, GLP-2, oxyntomodulin and glicentin are secreted from enteroendocrine cells throughout the gastrointestinal tract. GLP-1 and GLP-2 are also secreted in selected neurons in the brain.

It localises to the secreted. Functionally, plays a key role in glucose metabolism and homeostasis. Regulates blood glucose by increasing gluconeogenesis and decreasing glycolysis. A counterregulatory hormone of insulin, raises plasma glucose levels in response to insulin-induced hypoglycemia. Plays an important role in initiating and maintaining hyperglycemic conditions in diabetes. Potent stimulator of glucose-dependent insulin release. Also stimulates insulin release in response to IL6. Plays important roles on gastric motility and the suppression of plasma glucagon levels. May be involved in the suppression of satiety and stimulation of glucose disposal in peripheral tissues, independent of the actions of insulin. Has growth-promoting activities on intestinal epithelium. May also regulate the hypothalamic pituitary axis (HPA) via effects on LH, TSH, CRH, oxytocin, and vasopressin secretion. Increases islet mass through stimulation of islet neogenesis and pancreatic beta cell proliferation. Inhibits beta cell apoptosis. In terms of biological role, stimulates intestinal growth and up-regulates villus height in the small intestine, concomitant with increased crypt cell proliferation and decreased enterocyte apoptosis. The gastrointestinal tract, from the stomach to the colon is the principal target for GLP-2 action. Plays a key role in nutrient homeostasis, enhancing nutrient assimilation through enhanced gastrointestinal function, as well as increasing nutrient disposal. Stimulates intestinal glucose transport and decreases mucosal permeability. Its function is as follows. Significantly reduces food intake. Inhibits gastric emptying in humans. Suppression of gastric emptying may lead to increased gastric distension, which may contribute to satiety by causing a sensation of fullness. Functionally, may modulate gastric acid secretion and the gastro-pyloro-duodenal activity. May play an important role in intestinal mucosal growth in the early period of life. This is Pro-glucagon (GCG) from Sus scrofa (Pig).